A 294-amino-acid chain; its full sequence is Cell division protein FtsQ (294 aa).

Topologically, residues 1 to 26 (MARGPNRRRVDRVPGERRRRLARAMA) are cytoplasmic. Residues 27–49 (LALPSILALAALGGAATLGWRVG) traverse the membrane as a helical segment. Topologically, residues 50–294 (WKSDLLRVRE…GPQGRSSSLR (245 aa)) are periplasmic. The POTRA domain maps to 55-123 (LRVREIRFEG…PALEVQLAER (69 aa)). The tract at residues 266-294 (AGRRGEPDGRSSYAAGGGGGPQGRSSSLR) is disordered.

It belongs to the FtsQ/DivIB family. FtsQ subfamily.

It localises to the cell inner membrane. Its function is as follows. Essential cell division protein. In Anaeromyxobacter sp. (strain K), this protein is Cell division protein FtsQ.